Here is a 537-residue protein sequence, read N- to C-terminus: CTP synthase (537 aa).

The amidoligase domain stretch occupies residues 1–265 (MVHFIFVTGG…DNKVLKFFNI (265 aa)). Residue Ser13 participates in CTP binding. Ser13 contacts UTP. Residues 14 to 19 (SLGKGL) and Asp71 contribute to the ATP site. Residues Asp71 and Glu139 each contribute to the Mg(2+) site. CTP contacts are provided by residues 146-148 (DIE) and Lys222. Residue Lys222 coordinates UTP. The Glutamine amidotransferase type-1 domain maps to 290–536 (RIAIIAKYHK…IKAAIEYNKC (247 aa)). Position 352 (Gly352) interacts with L-glutamine. The active-site Nucleophile; for glutamine hydrolysis is Cys379. Residues 380–383 (FGMQ), Glu403, and Arg464 each bind L-glutamine. Active-site residues include His509 and Glu511.

The protein belongs to the CTP synthase family. As to quaternary structure, homotetramer.

It catalyses the reaction UTP + L-glutamine + ATP + H2O = CTP + L-glutamate + ADP + phosphate + 2 H(+). The enzyme catalyses L-glutamine + H2O = L-glutamate + NH4(+). It carries out the reaction UTP + NH4(+) + ATP = CTP + ADP + phosphate + 2 H(+). It functions in the pathway pyrimidine metabolism; CTP biosynthesis via de novo pathway; CTP from UDP: step 2/2. Its activity is regulated as follows. Allosterically activated by GTP, when glutamine is the substrate; GTP has no effect on the reaction when ammonia is the substrate. The allosteric effector GTP functions by stabilizing the protein conformation that binds the tetrahedral intermediate(s) formed during glutamine hydrolysis. Inhibited by the product CTP, via allosteric rather than competitive inhibition. Catalyzes the ATP-dependent amination of UTP to CTP with either L-glutamine or ammonia as the source of nitrogen. Regulates intracellular CTP levels through interactions with the four ribonucleotide triphosphates. This is CTP synthase from Rickettsia peacockii (strain Rustic).